A 485-amino-acid polypeptide reads, in one-letter code: Sulfate adenylyltransferase subunit 1 (485 aa).

The tr-type G domain occupies Lys-17–His-232. A G1 region spans residues Gly-26–Ser-33. A GTP-binding site is contributed by Gly-26–Ser-33. The interval Gly-84 to Asp-88 is G2. Residues Asp-105 to Gly-108 are G3. GTP contacts are provided by residues Asp-105–His-109 and Asn-160–Asp-163. Residues Asn-160–Asp-163 form a G4 region. The tract at residues Ser-197–Leu-199 is G5.

Belongs to the TRAFAC class translation factor GTPase superfamily. Classic translation factor GTPase family. CysN/NodQ subfamily. As to quaternary structure, heterodimer composed of CysD, the smaller subunit, and CysN.

The catalysed reaction is sulfate + ATP + H(+) = adenosine 5'-phosphosulfate + diphosphate. Its pathway is sulfur metabolism; hydrogen sulfide biosynthesis; sulfite from sulfate: step 1/3. Functionally, with CysD forms the ATP sulfurylase (ATPS) that catalyzes the adenylation of sulfate producing adenosine 5'-phosphosulfate (APS) and diphosphate, the first enzymatic step in sulfur assimilation pathway. APS synthesis involves the formation of a high-energy phosphoric-sulfuric acid anhydride bond driven by GTP hydrolysis by CysN coupled to ATP hydrolysis by CysD. In Bacteroides thetaiotaomicron (strain ATCC 29148 / DSM 2079 / JCM 5827 / CCUG 10774 / NCTC 10582 / VPI-5482 / E50), this protein is Sulfate adenylyltransferase subunit 1.